The following is a 125-amino-acid chain: MVKEFSRSDRVAEQIQRELADLLQFEVKDPRVSSMVTVTEVEVSGDMSHAKVYYTAPQGTPELQKGLEKTAGFLRSQLARRLLLRTVPQLHFVYDASIDRGMRIAKLIDEALPPVADPDQDSEPN.

This sequence belongs to the RbfA family. As to quaternary structure, monomer. Binds 30S ribosomal subunits, but not 50S ribosomal subunits or 70S ribosomes.

The protein resides in the cytoplasm. One of several proteins that assist in the late maturation steps of the functional core of the 30S ribosomal subunit. Associates with free 30S ribosomal subunits (but not with 30S subunits that are part of 70S ribosomes or polysomes). Required for efficient processing of 16S rRNA. May interact with the 5'-terminal helix region of 16S rRNA. The chain is Ribosome-binding factor A from Methylobacillus flagellatus (strain ATCC 51484 / DSM 6875 / VKM B-1610 / KT).